We begin with the raw amino-acid sequence, 540 residues long: Ecdysone 20-monooxygenase (540 aa).

Residue cysteine 488 participates in heme binding.

This sequence belongs to the cytochrome P450 family. The cofactor is heme. In terms of tissue distribution, strong expression by embryonic stage 10 in epidermis, decreases significantly in older embryos. Third instar larvae show expression in the midgut copper cells, Malpighian tubules and fat body. In the adult ovaries, expression is seen in both nurse cells and centripetally migrating follicle cells.

Its subcellular location is the mitochondrion membrane. The catalysed reaction is ecdysone + AH2 + O2 = 20-hydroxyecdysone + A + H2O. The protein operates within steroid biosynthesis; ecdysteroid biosynthesis. Its function is as follows. Required for CNS development; midline glial cells. Involved in the metabolism of insect hormones; responsible for all ecdysone 20-monooxygenase activity during embryonic, larval and adult stages. May be involved in the breakdown of synthetic insecticides. The sequence is that of Ecdysone 20-monooxygenase (shd) from Drosophila melanogaster (Fruit fly).